The following is a 176-amino-acid chain: N-alpha-acetyltransferase 30 (176 aa).

The 157-residue stretch at 3–159 folds into the N-acetyltransferase domain; the sequence is IVYKPLDIRN…DAFKLILPLT (157 aa).

The protein belongs to the acetyltransferase family. MAK3 subfamily. As to quaternary structure, component of the N-terminal acetyltransferase C (NatC) complex, which is composed of MAK3, MAK10 and MAK31.

The protein resides in the cytoplasm. The protein localises to the nucleus. The enzyme catalyses N-terminal L-methionyl-L-leucyl-[protein] + acetyl-CoA = N-terminal N(alpha)-acetyl-L-methionyl-L-leucyl-[protein] + CoA + H(+). It carries out the reaction N-terminal L-methionyl-L-isoleucyl-[protein] + acetyl-CoA = N-terminal N(alpha)-acetyl-L-methionyl-L-isoleucyl-[protein] + CoA + H(+). It catalyses the reaction N-terminal L-methionyl-L-phenylalanyl-[protein] + acetyl-CoA = N-terminal N(alpha)-acetyl-L-methionyl-L-phenylalanyl-[protein] + CoA + H(+). The catalysed reaction is N-terminal L-methionyl-L-tryptophyl-[protein] + acetyl-CoA = N-terminal N(alpha)-acetyl-L-methionyl-L-tryptophyl-[protein] + CoA + H(+). The enzyme catalyses N-terminal L-methionyl-L-tyrosyl-[protein] + acetyl-CoA = N-terminal N(alpha)-acetyl-L-methionyl-L-tyrosyl-[protein] + CoA + H(+). In terms of biological role, catalytic component of the NatC N-terminal acetyltransferase, which catalyzes acetylation of the N-terminus Met of L-A virus GAG protein and possibly GRH1. The protein is N-alpha-acetyltransferase 30 (MAK3) of Saccharomyces cerevisiae (strain ATCC 204508 / S288c) (Baker's yeast).